The primary structure comprises 241 residues: Uridylate kinase (241 aa).

15 to 18 (KMSG) serves as a coordination point for ATP. Residues 23-28 (GAEGFG) are involved in allosteric activation by GTP. Position 57 (Gly57) interacts with UMP. ATP is bound by residues Gly58 and Arg62. UMP contacts are provided by residues Asp77 and 138–145 (TGNPLFTT). Residues Thr165, Phe171, and Asp174 each contribute to the ATP site.

This sequence belongs to the UMP kinase family. As to quaternary structure, homohexamer.

Its subcellular location is the cytoplasm. It carries out the reaction UMP + ATP = UDP + ADP. It participates in pyrimidine metabolism; CTP biosynthesis via de novo pathway; UDP from UMP (UMPK route): step 1/1. With respect to regulation, allosterically activated by GTP. Inhibited by UTP. In terms of biological role, catalyzes the reversible phosphorylation of UMP to UDP. The sequence is that of Uridylate kinase from Blochmanniella pennsylvanica (strain BPEN).